Here is a 284-residue protein sequence, read N- to C-terminus: Large ribosomal subunit protein uL2 (284 aa).

Positions 232 to 284 (RGTAMNPVDHPHGGGEGRHNGYIPRTPWGKVTKGLKTRDKRKSNKWIVKDRRK) are disordered. The span at 240-250 (DHPHGGGEGRH) shows a compositional bias: basic and acidic residues. Residues 264–284 (KGLKTRDKRKSNKWIVKDRRK) show a composition bias toward basic residues.

This sequence belongs to the universal ribosomal protein uL2 family. In terms of assembly, part of the 50S ribosomal subunit. Forms a bridge to the 30S subunit in the 70S ribosome.

Functionally, one of the primary rRNA binding proteins. Required for association of the 30S and 50S subunits to form the 70S ribosome, for tRNA binding and peptide bond formation. It has been suggested to have peptidyltransferase activity; this is somewhat controversial. Makes several contacts with the 16S rRNA in the 70S ribosome. The sequence is that of Large ribosomal subunit protein uL2 from Chlamydia felis (strain Fe/C-56) (Chlamydophila felis).